A 625-amino-acid polypeptide reads, in one-letter code: UvrABC system protein C (625 aa).

The GIY-YIG domain maps to 13–92 (DKPGVYIMKD…IKKHRPKFNI (80 aa)). In terms of domain architecture, UVR spans 204–239 (EDIIKKLEKDMKEAADNLEFERAARIRDKINSLKHI).

It belongs to the UvrC family. As to quaternary structure, interacts with UvrB in an incision complex.

It localises to the cytoplasm. In terms of biological role, the UvrABC repair system catalyzes the recognition and processing of DNA lesions. UvrC both incises the 5' and 3' sides of the lesion. The N-terminal half is responsible for the 3' incision and the C-terminal half is responsible for the 5' incision. This Acetivibrio thermocellus (strain ATCC 27405 / DSM 1237 / JCM 9322 / NBRC 103400 / NCIMB 10682 / NRRL B-4536 / VPI 7372) (Clostridium thermocellum) protein is UvrABC system protein C.